The chain runs to 654 residues: Phosphate transport system permease protein PstA homolog (654 aa).

Transmembrane regions (helical) follow at residues leucine 22–threonine 42, alanine 64–alanine 84, isoleucine 113–phenylalanine 133, leucine 143–leucine 163, valine 266–isoleucine 286, isoleucine 303–valine 323, glutamate 368–isoleucine 388, leucine 417–tryptophan 437, phenylalanine 453–phenylalanine 473, asparagine 486–isoleucine 506, isoleucine 535–isoleucine 555, and valine 613–leucine 633. One can recognise an ABC transmembrane type-1 1 domain in the interval leucine 70–alanine 285. One can recognise an ABC transmembrane type-1 2 domain in the interval leucine 413–serine 623.

It belongs to the binding-protein-dependent transport system permease family. CysTW subfamily.

It localises to the cell membrane. Could be part of a binding-protein-dependent transport system for phosphate; probably responsible for the translocation of the substrate across the membrane. The sequence is that of Phosphate transport system permease protein PstA homolog (pstA) from Mycoplasma genitalium (strain ATCC 33530 / DSM 19775 / NCTC 10195 / G37) (Mycoplasmoides genitalium).